A 347-amino-acid polypeptide reads, in one-letter code: Heat-inducible transcription repressor HrcA (347 aa).

This sequence belongs to the HrcA family.

Functionally, negative regulator of class I heat shock genes (grpE-dnaK-dnaJ and groELS operons). Prevents heat-shock induction of these operons. The polypeptide is Heat-inducible transcription repressor HrcA (Lactiplantibacillus plantarum (strain ATCC BAA-793 / NCIMB 8826 / WCFS1) (Lactobacillus plantarum)).